A 1217-amino-acid polypeptide reads, in one-letter code: WD repeat-containing protein on Y chromosome (1217 aa).

WD repeat units follow at residues 155–199 (EDMT…LRSA), 323–362 (RIPL…EPSA), 366–405 (GHNG…LLQT), 456–495 (THAA…RKII), 508–547 (TIDI…VVRN), 595–635 (FHTD…RRYN), 740–779 (KVGD…IPEA), and 823–862 (GHLK…LGTL). Disordered regions lie at residues 910–929 (QVKR…VEDT) and 1033–1217 (AGGQ…KDKP). The span at 919 to 929 (EREDEGEVEDT) shows a compositional bias: acidic residues. Polar residues-rich tracts occupy residues 1041-1054 (RASS…TNSI), 1085-1107 (FGPN…SQLK), and 1137-1179 (PVST…TSAN). Over residues 1181 to 1190 (KPDIMPVKIK) the composition is skewed to low complexity. The span at 1198–1210 (RNTAPVQITTSIA) shows a compositional bias: polar residues.

This is WD repeat-containing protein on Y chromosome from Drosophila mojavensis (Fruit fly).